A 703-amino-acid chain; its full sequence is Polyribonucleotide nucleotidyltransferase (703 aa).

Residues Asp-486 and Asp-492 each coordinate Mg(2+). One can recognise a KH domain in the interval 553–612; sequence PKIEIIHINPDKIRDVIGPGGKKINEIIDATGVKLDIEQDGTVFIGSSDASMIEAAKKLI. The S1 motif domain occupies 622 to 690; the sequence is GQIYMATVKR…KQGRVNASRK (69 aa).

Belongs to the polyribonucleotide nucleotidyltransferase family. The cofactor is Mg(2+).

The protein localises to the cytoplasm. The enzyme catalyses RNA(n+1) + phosphate = RNA(n) + a ribonucleoside 5'-diphosphate. Functionally, involved in mRNA degradation. Catalyzes the phosphorolysis of single-stranded polyribonucleotides processively in the 3'- to 5'-direction. This Macrococcus caseolyticus (strain JCSC5402) (Macrococcoides caseolyticum) protein is Polyribonucleotide nucleotidyltransferase.